The following is a 668-amino-acid chain: Endoplasmic reticulum oxidoreductin-1 (668 aa).

The signal sequence occupies residues M1–C22. Intrachain disulfides connect C79–C413, C89–C94, C150–C352, and C416–C419. Positions K116–L142 are disordered. The FAD site is built by R186, T188, W199, S282, and H285. Residues N298 and N307 are each glycosylated (N-linked (GlcNAc...) asparagine). Residue R314 coordinates FAD. N406 carries N-linked (GlcNAc...) asparagine glycosylation. The active-site Nucleophile is the C416. C419 is an active-site residue. N443 carries an N-linked (GlcNAc...) asparagine glycan. Disordered stretches follow at residues V488 to K519 and G554 to F597. Over residues G494–S509 the composition is skewed to polar residues. Residues D570–F581 are compositionally biased toward acidic residues.

This sequence belongs to the EROs family. As to quaternary structure, may function both as a monomer and a homodimer. The cofactor is FAD.

Its subcellular location is the endoplasmic reticulum membrane. Functionally, essential oxidoreductase that oxidizes proteins in the endoplasmic reticulum to produce disulfide bonds. Acts by oxidizing directly pdi1 isomerase through a direct disulfide exchange. Does not act as a direct oxidant of folding substrate, but relies on pdi1 to transfer oxidizing equivalent. Does not oxidize all pdi related proteins, suggesting that it can discriminate between pdi1 and related proteins. Its reoxidation probably involves electron transfer to molecular oxygen via FAD. Acts independently of glutathione. May be responsible for a significant proportion of reactive oxygen species (ROS) in the cell, thereby being a source of oxidative stress. The sequence is that of Endoplasmic reticulum oxidoreductin-1 (ero-1) from Neurospora crassa (strain ATCC 24698 / 74-OR23-1A / CBS 708.71 / DSM 1257 / FGSC 987).